The following is a 103-amino-acid chain: MSEFNNVSVVKEANIYFDGKVTSRTVIFPDGSRKTLGVMLPGEYTFNTGSAELMEILSGEMTVVLPGSPDPVAIKGGEAFEVPENASFKVNVTAVSDYICSFL.

It belongs to the nucleoside phosphorylase PpnP family.

The enzyme catalyses a purine D-ribonucleoside + phosphate = a purine nucleobase + alpha-D-ribose 1-phosphate. It catalyses the reaction adenosine + phosphate = alpha-D-ribose 1-phosphate + adenine. The catalysed reaction is cytidine + phosphate = cytosine + alpha-D-ribose 1-phosphate. It carries out the reaction guanosine + phosphate = alpha-D-ribose 1-phosphate + guanine. The enzyme catalyses inosine + phosphate = alpha-D-ribose 1-phosphate + hypoxanthine. It catalyses the reaction thymidine + phosphate = 2-deoxy-alpha-D-ribose 1-phosphate + thymine. The catalysed reaction is uridine + phosphate = alpha-D-ribose 1-phosphate + uracil. It carries out the reaction xanthosine + phosphate = alpha-D-ribose 1-phosphate + xanthine. Its function is as follows. Catalyzes the phosphorolysis of diverse nucleosides, yielding D-ribose 1-phosphate and the respective free bases. Can use uridine, adenosine, guanosine, cytidine, thymidine, inosine and xanthosine as substrates. Also catalyzes the reverse reactions. This chain is Pyrimidine/purine nucleoside phosphorylase, found in Geobacter sp. (strain M21).